The sequence spans 430 residues: MKQALRVAFGFLILWASVLHAEVRIVIDSGVDSGRPIGVVPFQWAGPGAAPEDIGGIVAADLRNSGKFNPLDRARLPQQPGSAQEVQPAAWSALGIDAVVVGQVTPNPDGSYNVAYQLVDTGGAPGTVLAQNSYKVNKQWLRYAGHTASDEVFEKLTGIKGAFRTRIAYVVQTNGGQFPYELRVSDYDGYNQFVVHRSPQPLMSPAWSPDGSKLAYVTFESGRSALVIQTLANGAVRQVASFPRHNGAPAFSPDGSKLAFALSKTGSLNLYVMDLASGQIRQVTDGRSNNTEPTWFPDSQNLAFTSDQAGRPQVYKVNINGGAPQRITWEGSQNQDADVSSDGKFMVMVSSNGGQQHIAKQDLATGGVQVLSSTFLDETPSLAPNGTMVIYSSSQGMGSVLNLVSTDGRFKARLPATDGQVKFPAWSPYL.

Residues 1–21 (MKQALRVAFGFLILWASVLHA) form the signal peptide.

It belongs to the TolB family. In terms of assembly, the Tol-Pal system is composed of five core proteins: the inner membrane proteins TolA, TolQ and TolR, the periplasmic protein TolB and the outer membrane protein Pal. They form a network linking the inner and outer membranes and the peptidoglycan layer.

The protein localises to the periplasm. Part of the Tol-Pal system, which plays a role in outer membrane invagination during cell division and is important for maintaining outer membrane integrity. TolB occupies a key intermediary position in the Tol-Pal system because it communicates directly with both membrane-embedded components, Pal in the outer membrane and TolA in the inner membrane. The sequence is that of Tol-Pal system protein TolB from Escherichia coli O139:H28 (strain E24377A / ETEC).